The sequence spans 288 residues: Phenazine biosynthesis-like domain-containing protein (288 aa).

E46 is a catalytic residue.

Belongs to the PhzF family. In terms of assembly, interacts with UNRIP/MAWD.

The polypeptide is Phenazine biosynthesis-like domain-containing protein (PBLD) (Pongo abelii (Sumatran orangutan)).